We begin with the raw amino-acid sequence, 473 residues long: tRNA-2-methylthio-N(6)-dimethylallyladenosine synthase (473 aa).

An MTTase N-terminal domain is found at 3–120 (MKLHVKTWGC…LPEMIKEVQE (118 aa)). [4Fe-4S] cluster-binding residues include Cys-12, Cys-49, Cys-83, Cys-157, Cys-161, and Cys-164. The Radical SAM core domain occupies 143-375 (KADGATAFVS…QDRIQQQSQG (233 aa)). Residues 378 to 441 (RKMVGSVQRI…TNSIRGKFIR (64 aa)) enclose the TRAM domain.

This sequence belongs to the methylthiotransferase family. MiaB subfamily. Monomer. It depends on [4Fe-4S] cluster as a cofactor.

Its subcellular location is the cytoplasm. The enzyme catalyses N(6)-dimethylallyladenosine(37) in tRNA + (sulfur carrier)-SH + AH2 + 2 S-adenosyl-L-methionine = 2-methylsulfanyl-N(6)-dimethylallyladenosine(37) in tRNA + (sulfur carrier)-H + 5'-deoxyadenosine + L-methionine + A + S-adenosyl-L-homocysteine + 2 H(+). In terms of biological role, catalyzes the methylthiolation of N6-(dimethylallyl)adenosine (i(6)A), leading to the formation of 2-methylthio-N6-(dimethylallyl)adenosine (ms(2)i(6)A) at position 37 in tRNAs that read codons beginning with uridine. This Psychromonas ingrahamii (strain DSM 17664 / CCUG 51855 / 37) protein is tRNA-2-methylthio-N(6)-dimethylallyladenosine synthase.